A 1222-amino-acid chain; its full sequence is ATP-dependent helicase/nuclease subunit A (1222 aa).

Residues 39-495 (QKRTAQQIEA…ILLKENFRSQ (457 aa)) form the UvrD-like helicase ATP-binding domain. Residue 60–67 (ASAGSGKT) participates in ATP binding. Residues 524-810 (QLIAGSHAQT…NLMTIHKSKG (287 aa)) form the UvrD-like helicase C-terminal domain.

This sequence belongs to the helicase family. AddA subfamily. Heterodimer of AddA and AddB/RexB. The cofactor is Mg(2+).

It catalyses the reaction Couples ATP hydrolysis with the unwinding of duplex DNA by translocating in the 3'-5' direction.. The enzyme catalyses ATP + H2O = ADP + phosphate + H(+). The heterodimer acts as both an ATP-dependent DNA helicase and an ATP-dependent, dual-direction single-stranded exonuclease. Recognizes the chi site generating a DNA molecule suitable for the initiation of homologous recombination. The AddA nuclease domain is required for chi fragment generation; this subunit has the helicase and 3' -&gt; 5' nuclease activities. The polypeptide is ATP-dependent helicase/nuclease subunit A (Streptococcus pyogenes serotype M4 (strain MGAS10750)).